The sequence spans 543 residues: Cytochrome P450 307a1 (543 aa).

S219 is modified (phosphoserine). Residues 440–460 (FLEPSKEQSPKNSKGSDSGIE) form a disordered region. Positions 449–460 (PKNSKGSDSGIE) are enriched in polar residues. C485 is a heme binding site.

This sequence belongs to the cytochrome P450 family. It depends on heme as a cofactor.

It localises to the endoplasmic reticulum membrane. It is found in the microsome membrane. Required for correct development of the embryonic midline glial cells which are necessary for the formation of distinct segmental commissures. This Drosophila melanogaster (Fruit fly) protein is Cytochrome P450 307a1 (spo).